We begin with the raw amino-acid sequence, 77 residues long: Large ribosomal subunit protein bL28 (77 aa).

The protein belongs to the bacterial ribosomal protein bL28 family.

The sequence is that of Large ribosomal subunit protein bL28 from Laribacter hongkongensis (strain HLHK9).